Reading from the N-terminus, the 432-residue chain is Ornithine decarboxylase 1A, chloroplastic (432 aa).

Lys-95 carries the post-translational modification N6-(pyridoxal phosphate)lysine. Pyridoxal 5'-phosphate contacts are provided by residues Ser-227, Gly-265, and 298 to 301; that span reads EPGR. 341–342 contacts substrate; sequence YD. Cys-377 (proton donor; shared with dimeric partner) is an active-site residue. Asp-378 is a substrate binding site. Tyr-406 provides a ligand contact to pyridoxal 5'-phosphate.

The protein belongs to the Orn/Lys/Arg decarboxylase class-II family. Homodimer. Only the dimer is catalytically active, as the active sites are constructed of residues from both monomers. Pyridoxal 5'-phosphate serves as cofactor.

It localises to the plastid. The protein resides in the chloroplast. It carries out the reaction L-ornithine + H(+) = putrescine + CO2. The protein operates within alkaloid biosynthesis; nicotine biosynthesis. It participates in amine and polyamine biosynthesis; putrescine biosynthesis via L-ornithine pathway; putrescine from L-ornithine: step 1/1. Functionally, involved in the biosynthesis of pyridine alkaloid natural products, leading mainly to the production of anabasine, anatabine, nicotine and nornicotine, effective deterrents against herbivores with antiparasitic and pesticide properties (neurotoxins); nornicotine serves as the precursor in the synthesis of the carcinogen compound N'-nitrosonornicotine (NNN). Catalyzes the first and rate-limiting step of polyamine biosynthesis that converts ornithine into putrescine, which is the precursor for the polyamines, spermidine and spermine. Polyamines are essential for cell proliferation and are implicated in cellular processes, ranging from DNA replication to apoptosis. The polypeptide is Ornithine decarboxylase 1A, chloroplastic (Nicotiana tabacum (Common tobacco)).